We begin with the raw amino-acid sequence, 539 residues long: Aluminum-activated malate transporter 13 (539 aa).

Helical transmembrane passes span 57–77, 80–100, 107–127, 130–150, 165–185, and 192–212; these read VGVALTLVSLLYLMEPFFEGV, NALWAVMTVVVVLEFSAGATL, GLGTLIAGSLAFFIEWVAIHS, ILGGIFIGTSVFTIGSMITYM, LVFLLTFNLITVSSYRVDTVI, and LYTIGMGIGICLFMSLLFFPI.

The protein belongs to the aromatic acid exporter (TC 2.A.85) family.

It is found in the membrane. Its function is as follows. Malate transporter. The protein is Aluminum-activated malate transporter 13 (ALMT13) of Arabidopsis thaliana (Mouse-ear cress).